The primary structure comprises 582 residues: Phosphoglucomutase, cytoplasmic (582 aa).

2 residues coordinate alpha-D-glucose 1,6-bisphosphate: arginine 25 and serine 124. The active-site Phosphoserine intermediate is serine 124. Serine 124, aspartate 300, aspartate 302, and aspartate 304 together coordinate Mg(2+). Phosphoserine is present on serine 124. The alpha-D-glucose 1,6-bisphosphate site is built by aspartate 304, arginine 305, threonine 368, glutamate 387, serine 389, and lysine 400.

The protein belongs to the phosphohexose mutase family. Monomer. The cofactor is Mg(2+).

The protein resides in the cytoplasm. It catalyses the reaction alpha-D-glucose 1-phosphate = alpha-D-glucose 6-phosphate. The enzyme catalyses O-phospho-L-seryl-[protein] + alpha-D-glucose 1-phosphate = alpha-D-glucose 1,6-bisphosphate + L-seryl-[protein]. The catalysed reaction is alpha-D-glucose 1,6-bisphosphate + L-seryl-[protein] = O-phospho-L-seryl-[protein] + alpha-D-glucose 6-phosphate. Functionally, catalyzes the reversible isomerization of alpha-D-glucose 1-phosphate to alpha-D-glucose 6-phosphate. The mechanism proceeds via the intermediate compound alpha-D-glucose 1,6-bisphosphate. This enzyme participates in both the breakdown and synthesis of glucose. The sequence is that of Phosphoglucomutase, cytoplasmic (PGM1) from Pisum sativum (Garden pea).